The chain runs to 131 residues: Small ribosomal subunit protein eS17 (131 aa).

The protein belongs to the eukaryotic ribosomal protein eS17 family.

This Drosophila melanogaster (Fruit fly) protein is Small ribosomal subunit protein eS17 (RpS17).